We begin with the raw amino-acid sequence, 796 residues long: Peroxisome proliferator-activated receptor gamma coactivator 1-alpha (796 aa).

Lys77 carries the post-translational modification N6-acetyllysine. The interval 98–138 (PVDEDGLPSFDALTDGDVTTENEASPSSMPDGTPPPQEAEE) is disordered. Over residues 114–127 (DVTTENEASPSSMP) the composition is skewed to polar residues. The LXXLL motif motif lies at 142–146 (LKKLL). At Lys144 the chain carries N6-acetyllysine. The residue at position 176 (Thr176) is a Phosphothreonine; by AMPK. The residue at position 182 (Lys182) is an N6-acetyllysine. The segment at 211–274 (YLTTNDDPPH…PNDPKGSPFE (64 aa)) is disordered. A compositionally biased stretch (basic and acidic residues) spans 217–235 (DPPHTKPTETRNSSRDKCT). The span at 242-258 (TQSQSQHLQAKPTSLSL) shows a compositional bias: polar residues. Residues Lys252, Lys269, Lys276, and Lys319 each carry the N6-acetyllysine modification. A disordered region spans residues 288–349 (GTAGLTPPTT…NNSTKKGPEQ (62 aa)). The segment at 291 to 337 (GLTPPTTPPHKANQDNPFRASPKLKPPCKTVVPPPSKKTRYSESSGT) is interaction with PPARG. The segment covering 332 to 344 (SESSGTHGNNSTK) has biased composition (polar residues). 3 positions are modified to N6-acetyllysine: Lys345, Lys411, and Lys449. Positions 348–796 (EQSELYAQLS…LKEAQRSLRR (449 aa)) are mediates interaction with RNF34. The disordered stretch occupies residues 463-487 (HFGHPSQAVFDDEADKTSELRDSDF). Basic and acidic residues predominate over residues 477–486 (DKTSELRDSD). Position 537 is a phosphoserine; by AMPK (Ser537). 2 disordered regions span residues 541-637 (FNSP…SYEE) and 648-667 (YRREYEKRESERAKQRERQR). A compositionally biased stretch (low complexity) spans 568–603 (RSFSQHRSCSRSPYSRSRSRSPGSRSSSRSCYYSES). Positions 620-629 (SRSRSPYSRR) are enriched in basic residues. In terms of domain architecture, RRM spans 675–751 (RVIYVGKIRP…TDFELYFCGR (77 aa)). N6-acetyllysine is present on residues Lys756 and Lys777.

Homooligomer. Interacts with MYBBP1A; inhibits MYBBP1A transcriptional activation. Interacts with PRDM16, LPIN1 and PML. Interacts (via LXXLL motif) with RORA and RORC (via AF-2 motif); activates RORA and RORC transcriptional activation. Interacts with LRPPRC. Interacts with FOXO1. Interacts with NR5A2. Phosphorylation by AMPK in skeletal muscle increases activation of its own promoter. Phosphorylated by CLK2. In terms of processing, heavily acetylated by KAT2A/GCN5 under conditions of high nutrients, leading to inactivation of PPARGC1A. Deacetylated by SIRT1 in low nutrients/high NAD conditions, leading to its activation. Post-translationally, ubiquitinated. Ubiquitination by RNF34 induces proteasomal degradation.

The protein resides in the nucleus. The protein localises to the PML body. Functionally, transcriptional coactivator for steroid receptors and nuclear receptors. Greatly increases the transcriptional activity of PPARG and thyroid hormone receptor on the uncoupling protein promoter. Can regulate key mitochondrial genes that contribute to the program of adaptive thermogenesis. Plays an essential role in metabolic reprogramming in response to dietary availability through coordination of the expression of a wide array of genes involved in glucose and fatty acid metabolism. Acts as a key regulator of gluconeogenesis: stimulates hepatic gluconeogenesis by increasing the expression of gluconeogenic enzymes, and acting together with FOXO1 to promote the fasting gluconeogenic program. Induces the expression of PERM1 in the skeletal muscle in an ESRRA-dependent manner. Also involved in the integration of the circadian rhythms and energy metabolism. Required for oscillatory expression of clock genes, such as BMAL1 and NR1D1, through the coactivation of RORA and RORC, and metabolic genes, such as PDK4 and PEPCK. This Sus scrofa (Pig) protein is Peroxisome proliferator-activated receptor gamma coactivator 1-alpha (PPARGC1A).